The following is a 962-amino-acid chain: Cohesin subunit psc3 (962 aa).

A disordered region spans residues 1–72; that stretch reads MSESVTTGSD…GVNVKRSRRN (72 aa). Residues 21 to 30 show a composition bias toward polar residues; sequence VMLSQSFDPM. Over residues 51–71 the composition is skewed to basic residues; the sequence is SSKKRHPRPNSKGVNVKRSRR. Residues 236-275 adopt a coiled-coil conformation; sequence LCEKSKELLNEHAIATKQLEKEEKRSRVNRNRINELNNSL. In terms of domain architecture, SCD spans 297 to 382; the sequence is FVHRYRDVEP…SRFKERILEM (86 aa).

This sequence belongs to the SCC3 family. As to quaternary structure, cohesin complexes are composed of the psm1/smc1 and psm3/smc3 heterodimer attached via their hinge domain, rad21/scc1 which link them, and psc3/scc3, which interacts with rad21. Interacts with swi6. The interaction with swi6 may contribute to recruit cohesin complex to heterochromatin.

Its subcellular location is the nucleus. It is found in the chromosome. The protein localises to the centromere. Functionally, component of cohesin complex, a complex required for the cohesion of sister chromatids after DNA replication. The cohesin complex apparently forms a large proteinaceous ring within which sister chromatids can be trapped. At anaphase, the rad21 subunit of the cohesin complex is cleaved and dissociates from chromatin, allowing sister chromatids to segregate. The cohesin complex may also play a role in spindle pole assembly during mitosis. The protein is Cohesin subunit psc3 (psc3) of Schizosaccharomyces pombe (strain 972 / ATCC 24843) (Fission yeast).